The sequence spans 384 residues: MVLSSSLFVQKRSTTTALKQPKELGHYSRTQDNGFLVNDDSRLAYYYLPDTDLDKKLDLLSGIKKFKECNTEEFDSTTLHGLLSTLEEYERRKSKKTKVDIITFRGIIRKLISSAFDSSQFNPVNFRIVSFDGQLFIKEVKTDASETSINKNRESLQARAYYSGYKFEALATLSLPLPLVPRTTLEKRPKKIINNGDQFISMVRTGIGKCKILIGAEVDCIFDFKEDSDDNLKHYAELKCTTMVNTVSDAHKFERKLFKTWLQCFLVGINRIIYGFRDDNFMLKTVEEFTTSEVPLILKNNNPQMQTVCVDAIKWYGAFTEWLLTSIPRPEDDIDTIKAYKLIFENNHLKLTEIESDDEEYKQLVEGEEILSNSFKQWRKDLRK.

Residue Glu168 coordinates a divalent metal cation. Position 217 (Glu217) interacts with substrate. Residues Asp219, Glu237, and Leu238 each coordinate a divalent metal cation. 2 residues coordinate substrate: Lys239 and Gln263.

Belongs to the DXO/Dom3Z family. In terms of assembly, interacts with RAT1; the interaction is direct, stabilizes RAT1 protein structure and stimulates its exoribonuclease activity. The interaction also stimulates RAI1 pyrophosphohydrolase activity, probably by recruiting it to mRNA substrates. The cofactor is a divalent metal cation.

The protein localises to the nucleus. The catalysed reaction is a 5'-end NAD(+)-phospho-ribonucleoside in mRNA + H2O = a 5'-end phospho-ribonucleoside in mRNA + NAD(+) + H(+). It carries out the reaction a 5'-end (N(7)-methyl 5'-triphosphoguanosine)-ribonucleoside-ribonucleotide in mRNA + H2O = a (N(7)-methyl 5'-triphosphoguanosine)-nucleoside + a 5'-end phospho-ribonucleoside in mRNA + H(+). The enzyme catalyses a 5'-end triphospho-ribonucleoside in mRNA + H2O = a 5'-end phospho-ribonucleoside in mRNA + diphosphate + H(+). In terms of biological role, decapping enzyme for NAD-capped RNAs: specifically hydrolyzes the nicotinamide adenine dinucleotide (NAD) cap from a subset of RNAs by removing the entire NAD moiety from the 5'-end of an NAD-capped RNA. The NAD-cap is present at the 5'-end of some RNAs and snoRNAs. In contrast to the canonical 5'-end N7 methylguanosine (m7G) cap, the NAD cap promotes mRNA decay. Also acts as a non-canonical decapping enzyme that removes the entire cap structure of m7G capped or incompletely capped RNAs. Has decapping activity toward incomplete 5'-end m7G cap mRNAs such as unmethylated 5'-end-capped RNA (cap0), while it has no activity toward 2'-O-ribose methylated m7G cap (cap1). Also possesses RNA 5'-pyrophosphohydrolase activity by hydrolyzing the 5'-end triphosphate to release pyrophosphates. Stimulates exoribonuclease activity of Rat1, allowing it to degrade RNAs with stable secondary structure more effectively. The polypeptide is Decapping nuclease RAI1 (RAI1) (Kluyveromyces lactis (strain ATCC 8585 / CBS 2359 / DSM 70799 / NBRC 1267 / NRRL Y-1140 / WM37) (Yeast)).